The following is a 350-amino-acid chain: Phosphate acyltransferase (350 aa).

It belongs to the PlsX family. As to quaternary structure, homodimer. Probably interacts with PlsY.

The protein localises to the cytoplasm. The catalysed reaction is a fatty acyl-[ACP] + phosphate = an acyl phosphate + holo-[ACP]. The protein operates within lipid metabolism; phospholipid metabolism. Its function is as follows. Catalyzes the reversible formation of acyl-phosphate (acyl-PO(4)) from acyl-[acyl-carrier-protein] (acyl-ACP). This enzyme utilizes acyl-ACP as fatty acyl donor, but not acyl-CoA. In Magnetococcus marinus (strain ATCC BAA-1437 / JCM 17883 / MC-1), this protein is Phosphate acyltransferase.